Here is a 252-residue protein sequence, read N- to C-terminus: Thiazole synthase (252 aa).

Catalysis depends on Lys-91, which acts as the Schiff-base intermediate with DXP. 1-deoxy-D-xylulose 5-phosphate-binding positions include Gly-152, Ala-179–Gly-180, and Asn-201–Thr-202.

Belongs to the ThiG family. In terms of assembly, homotetramer. Forms heterodimers with either ThiH or ThiS.

Its subcellular location is the cytoplasm. The enzyme catalyses [ThiS sulfur-carrier protein]-C-terminal-Gly-aminoethanethioate + 2-iminoacetate + 1-deoxy-D-xylulose 5-phosphate = [ThiS sulfur-carrier protein]-C-terminal Gly-Gly + 2-[(2R,5Z)-2-carboxy-4-methylthiazol-5(2H)-ylidene]ethyl phosphate + 2 H2O + H(+). It functions in the pathway cofactor biosynthesis; thiamine diphosphate biosynthesis. Catalyzes the rearrangement of 1-deoxy-D-xylulose 5-phosphate (DXP) to produce the thiazole phosphate moiety of thiamine. Sulfur is provided by the thiocarboxylate moiety of the carrier protein ThiS. In vitro, sulfur can be provided by H(2)S. In Erwinia amylovora (Fire blight bacteria), this protein is Thiazole synthase.